A 317-amino-acid polypeptide reads, in one-letter code: MNKWQELTIEVNREVEEAASNILIESGSQGVTIDDSADYLENADRFGELYPEVEQVETVKITAYYPESADIEAITKQVNDRLDELTDFGLETGDIHLVTQELVEEDWAENWKKYYEPARITHDLTIVPSWTDYEASVGEKIIKLDPGMAFGTGTHPTTKMSLFALEQVLRGGETVIDVGTGSGVLSIASSLLGAKEIYAYDLDDVAVRVAQENIDMNPGMENIHVATGDLLKGVTQEADVIVANILADILIHLMEDAYRLVKDEGYLIMSGIISEKWDMVRELAEKAGFLLETHMVQGEWNACVFKKTDDISGVIGG.

Residues T158, G179, D201, and N244 each coordinate S-adenosyl-L-methionine.

This sequence belongs to the methyltransferase superfamily. PrmA family.

The protein localises to the cytoplasm. The catalysed reaction is L-lysyl-[protein] + 3 S-adenosyl-L-methionine = N(6),N(6),N(6)-trimethyl-L-lysyl-[protein] + 3 S-adenosyl-L-homocysteine + 3 H(+). Its function is as follows. Methylates ribosomal protein L11. This is Ribosomal protein L11 methyltransferase from Streptococcus thermophilus (strain CNRZ 1066).